Here is a 663-residue protein sequence, read N- to C-terminus: DNA ligase (663 aa).

Residues 33–37 (DYSYD), 82–83 (SI), and E112 contribute to the NAD(+) site. The active-site N6-AMP-lysine intermediate is the K114. NAD(+)-binding residues include R135, E171, K285, and K309. The Zn(2+) site is built by C403, C406, C419, and C424. One can recognise a BRCT domain in the interval 581 to 663 (DKEAPLQGKV…SRILDAKSVS (83 aa)).

It belongs to the NAD-dependent DNA ligase family. LigA subfamily. The cofactor is Mg(2+). Mn(2+) serves as cofactor.

It carries out the reaction NAD(+) + (deoxyribonucleotide)n-3'-hydroxyl + 5'-phospho-(deoxyribonucleotide)m = (deoxyribonucleotide)n+m + AMP + beta-nicotinamide D-nucleotide.. In terms of biological role, DNA ligase that catalyzes the formation of phosphodiester linkages between 5'-phosphoryl and 3'-hydroxyl groups in double-stranded DNA using NAD as a coenzyme and as the energy source for the reaction. It is essential for DNA replication and repair of damaged DNA. The chain is DNA ligase from Chlamydia trachomatis serovar L2 (strain ATCC VR-902B / DSM 19102 / 434/Bu).